A 77-amino-acid chain; its full sequence is Small nuclear ribonucleoprotein G (77 aa).

Residues 2 to 77 (VSTPELKKYM…IISLEALDAI (76 aa)) form the Sm domain.

This sequence belongs to the snRNP Sm proteins family. Component of the Sm core complex, present in spliceosomal snRNP U1, U2, U4/U6 and U5. The core complex contains SMB1, SMD1, SMD2, SMD3, SME1, SMX3 and SMX2 (Sm proteins B, D1, D2, D3, E, F and G, respectively), and is probably a heptameric ring structure. SMX2 specifically interacts with SME1. Belongs to the CWC complex (or CEF1-associated complex), a spliceosome sub-complex reminiscent of a late-stage spliceosome composed of the U2, U5 and U6 snRNAs and at least BUD13, BUD31, BRR2, CDC40, CEF1, CLF1, CUS1, CWC2, CWC15, CWC21, CWC22, CWC23, CWC24, CWC25, CWC27, ECM2, HSH155, IST3, ISY1, LEA1, MSL1, NTC20, PRP8, PRP9, PRP11, PRP19, PRP21, PRP22, PRP45, PRP46, SLU7, SMB1, SMD1, SMD2, SMD3, SMX2, SMX3, SNT309, SNU114, SPP2, SYF1, SYF2, RSE1 and YJU2. Component of the U4/U6-U5 tri-snRNP complex composed of the U4, U6 and U5 snRNAs and at least PRP3, PRP4, PRP6, PRP8, PRP18, PRP31, PRP38, SNU13, SNU23, SNU66, SNU114, SPP381, SMB1, SMD1, SMD2, SMD3, SMX2, SMX3, LSM2, LSM3, LSM4, LSM5, LSM6, LSM7, LSM8, BRR2 and DIB1.

It is found in the nucleus. The protein localises to the cytoplasm. Its function is as follows. Plays a role in pre-mRNA splicing as a core component of the spliceosomal U1, U2, U4 and U5 small nuclear ribonucleoproteins (snRNPs), the building blocks of the spliceosome. This Saccharomyces cerevisiae (strain ATCC 204508 / S288c) (Baker's yeast) protein is Small nuclear ribonucleoprotein G (SMX2).